Reading from the N-terminus, the 706-residue chain is Translation factor GUF1 homolog, mitochondrial (706 aa).

In terms of domain architecture, tr-type G spans 89 to 272 (SRIRNFSIIA…SIVKNVPPPQ (184 aa)). Residues 98–105 (AHIDHGKS), 165–169 (DTPGH), and 219–222 (NKID) each bind GTP.

This sequence belongs to the TRAFAC class translation factor GTPase superfamily. Classic translation factor GTPase family. LepA subfamily.

The protein localises to the mitochondrion inner membrane. It catalyses the reaction GTP + H2O = GDP + phosphate + H(+). In terms of biological role, promotes mitochondrial protein synthesis. May act as a fidelity factor of the translation reaction, by catalyzing a one-codon backward translocation of tRNAs on improperly translocated ribosomes. Binds to mitochondrial ribosomes in a GTP-dependent manner. The protein is Translation factor GUF1 homolog, mitochondrial of Thalassiosira pseudonana (Marine diatom).